The primary structure comprises 147 residues: Large ribosomal subunit protein uL16 (147 aa).

It belongs to the universal ribosomal protein uL16 family. In terms of assembly, part of the 50S ribosomal subunit.

Binds 23S rRNA and is also seen to make contacts with the A and possibly P site tRNAs. This chain is Large ribosomal subunit protein uL16, found in Finegoldia magna (strain ATCC 29328 / DSM 20472 / WAL 2508) (Peptostreptococcus magnus).